The primary structure comprises 250 residues: Membrane-spanning 4-domains subfamily A member 8 (250 aa).

The Cytoplasmic segment spans residues 1 to 74 (MNSMTSAVPV…ALKEGKTLGA (74 aa)). A helical membrane pass occupies residues 75–95 (IQIIIGLAHIGLGSIMATVLV). The Extracellular portion of the chain corresponds to 96–98 (GEY). The chain crosses the membrane as a helical span at residues 99 to 119 (LSISFYGGFPFWGGLWFIISG). At 120–136 (SLSVAAENQPYSYCLLS) the chain is on the cytoplasmic side. The helical transmembrane segment at 137 to 157 (GSLGLNIVSAICSAVGVILFI) threads the bilayer. Residues 158 to 180 (TDLSIPHPYAYPDYYPYAWGVNP) are Extracellular-facing. Residues 181–201 (GMAISGVLLVFCLLEFGIACA) form a helical membrane-spanning segment. Topologically, residues 202–250 (SSHFGCQLVCCQSSNVSVIYPNIYAANPVITPEPVTSPPSYSSEIQANK) are cytoplasmic.

The protein belongs to the MS4A family. In terms of tissue distribution, expressed by hematopoietic tissues and cells lines.

It is found in the membrane. Its function is as follows. May be involved in signal transduction as a component of a multimeric receptor complex. The polypeptide is Membrane-spanning 4-domains subfamily A member 8 (MS4A8) (Homo sapiens (Human)).